Here is a 333-residue protein sequence, read N- to C-terminus: S-adenosylmethionine-dependent nucleotide dehydratase (333 aa).

Positions 1 to 239 (MNIKTIVINW…SAPQKQNNVI (239 aa)) constitute a Radical SAM core domain. [4Fe-4S] cluster is bound by residues Cys-16, Cys-20, and Cys-23.

This sequence belongs to the radical SAM superfamily. Viperin family. It depends on [4Fe-4S] cluster as a cofactor.

The catalysed reaction is GTP + AH2 + S-adenosyl-L-methionine = 3'-deoxy-3',4'-didehydro-GTP + 5'-deoxyadenosine + L-methionine + A + H2O + H(+). In terms of biological role, expression of pVip56 in E.coli (strain MG1655) confers resistance to phage P1; has no effect against T7. Catalyzes the conversion of guanosine triphosphate (GTP) to 3'-deoxy-3',4'-didehydro-GTP (ddhGTP), probably via a SAM-dependent radical mechanism. The modified nucleotide represses transcription from T7 RNA polymerase-directed genes (possibly by acting as chain terminators), strongly suggesting these nucleotides block viral polymerase transcription. How this protein allows bacteria to resist viruses that do not encode their own RNA polymerase (such as lambda, P1) is unknown. The protein is S-adenosylmethionine-dependent nucleotide dehydratase of Fibrobacter sp. (strain UWH6).